The chain runs to 299 residues: HTH-type transcriptional regulator ArgP (299 aa).

Positions 4 to 60 constitute an HTH lysR-type domain; sequence LDYKLLLALDAVMQEQNFERAAQRLHITQSAISQRIKQLEQQFAEPLLIRSQPLQAT. Residues 21–40 constitute a DNA-binding region (H-T-H motif); it reads FERAAQRLHITQSAISQRIK.

It belongs to the LysR transcriptional regulatory family. As to quaternary structure, homodimer.

In terms of biological role, controls the transcription of genes involved in arginine and lysine metabolism. The polypeptide is HTH-type transcriptional regulator ArgP (Aeromonas salmonicida).